Reading from the N-terminus, the 66-residue chain is Large ribosomal subunit protein uL29 (66 aa).

It belongs to the universal ribosomal protein uL29 family.

This Rhizobium etli (strain ATCC 51251 / DSM 11541 / JCM 21823 / NBRC 15573 / CFN 42) protein is Large ribosomal subunit protein uL29.